We begin with the raw amino-acid sequence, 489 residues long: Rhamnulokinase (489 aa).

13–17 (ASSGR) is a binding site for ATP. Cysteines 68 and 222 form a disulfide. Residues glycine 83 and 236 to 238 (HDT) contribute to the substrate site. The Proton acceptor role is filled by aspartate 237. Threonine 259 is an ATP binding site. Asparagine 296 lines the substrate pocket. Position 304 (glutamine 304) interacts with ATP. The cysteines at positions 353 and 370 are disulfide-linked. An ATP-binding site is contributed by glycine 402. The cysteines at positions 413 and 417 are disulfide-linked.

The protein belongs to the rhamnulokinase family. Monomer. Mg(2+) is required as a cofactor.

The enzyme catalyses L-rhamnulose + ATP = L-rhamnulose 1-phosphate + ADP + H(+). The protein operates within carbohydrate degradation; L-rhamnose degradation; glycerone phosphate from L-rhamnose: step 2/3. In terms of biological role, involved in the catabolism of L-rhamnose (6-deoxy-L-mannose). Catalyzes the transfer of the gamma-phosphate group from ATP to the 1-hydroxyl group of L-rhamnulose to yield L-rhamnulose 1-phosphate. The sequence is that of Rhamnulokinase from Escherichia coli (strain 55989 / EAEC).